Consider the following 356-residue polypeptide: uncharacterized protein (356 aa).

Residues 8–28 form a helical membrane-spanning segment; it reads ILGFVLFVLGAAIFLTEVMHS.

It to C.elegans C41C4.1 and C18B2.1.

The protein resides in the membrane. This is an uncharacterized protein from Caenorhabditis elegans.